Consider the following 110-residue polypeptide: Large ribosomal subunit protein uL22 (110 aa).

Belongs to the universal ribosomal protein uL22 family. In terms of assembly, part of the 50S ribosomal subunit.

This protein binds specifically to 23S rRNA; its binding is stimulated by other ribosomal proteins, e.g. L4, L17, and L20. It is important during the early stages of 50S assembly. It makes multiple contacts with different domains of the 23S rRNA in the assembled 50S subunit and ribosome. Its function is as follows. The globular domain of the protein is located near the polypeptide exit tunnel on the outside of the subunit, while an extended beta-hairpin is found that lines the wall of the exit tunnel in the center of the 70S ribosome. This chain is Large ribosomal subunit protein uL22, found in Haemophilus influenzae (strain 86-028NP).